The primary structure comprises 352 residues: WAT1-related protein At1g11450 (352 aa).

10 consecutive transmembrane segments (helical) span residues 14–34 (WPPMIVMVTSQVAMGSVNALV), 46–66 (IIGAYRMAISSFILVPIAYFL), 83–103 (FISGLLGASLMQFFYLLGLSY), 107–127 (TVACALVSLMPAITFAFALIL), 139–159 (AGMIKVMGTLICISGALFLTF), 187–207 (WLLGCLYLVIGIVLLSLWILF), 219–239 (FSSTCLMSIFAAFQCALLSLY), 253–273 (FVIGVIIYAGVIGQAMSTVAA), 283–303 (VFASAIMPVSLISATLFDFLI), and 308–328 (LYLGSVIGSVGTIIGLYVFLW). EamA domains lie at 27–157 (MGSV…ALFL) and 192–335 (LYLV…KETE).

The protein belongs to the drug/metabolite transporter (DMT) superfamily. Plant drug/metabolite exporter (P-DME) (TC 2.A.7.4) family.

It is found in the membrane. The sequence is that of WAT1-related protein At1g11450 from Arabidopsis thaliana (Mouse-ear cress).